A 1055-amino-acid polypeptide reads, in one-letter code: Elongation factor 3 (1055 aa).

Residue Val45 coordinates ADP. HEAT repeat units follow at residues 48 to 86, 96 to 133, 134 to 172, 176 to 213, 218 to 255, 257 to 290, and 296 to 337; these read FTQI…NGAA, SAEN…SMNP, WASF…SAPF, EAMP…LVEN, KFVP…APTI, LIAP…LVDS, and PFLP…VPAE. ABC transporter domains lie at 447–659 and 687–1004; these read CNIE…SYYQ and LKMR…KKAA. Residues Asn723, Glu933, Asn936, and His962 each contribute to the ADP site. The interval 1024–1055 is disordered; sequence EKKLSAADKRKAKKDRMARRKRGEEVFSDEEL. Residues 1033 to 1044 show a composition bias toward basic residues; the sequence is RKAKKDRMARRK.

Belongs to the ABC transporter superfamily. ABCF family. EF3 subfamily. As to quaternary structure, interacts with CCH1; the interaction is direct and required for the localization of CCH1 to the cell membrane.

The protein localises to the cytoplasm. The protein resides in the cytosol. It catalyses the reaction ATP + H2O = ADP + phosphate + H(+). It functions in the pathway protein biosynthesis; polypeptide chain elongation. Ribosome-dependent ATPase that functions in cytoplasmic translation elongation. Required for the ATP-dependent release of deacylated tRNA from the ribosomal E-site during protein biosynthesis. Stimulates the eEF1A-dependent binding of aminoacyl-tRNA to the ribosomal A-site, which has reduced affinity for tRNA as long as the E-site is occupied. Assists translation termination by stimulating the release of nascent protein from the ribosome by release factors. Appears to localize calcium-channel protein CCH1 to the plasma membrane. This is Elongation factor 3 from Cryptococcus neoformans var. grubii serotype A (strain H99 / ATCC 208821 / CBS 10515 / FGSC 9487) (Filobasidiella neoformans var. grubii).